We begin with the raw amino-acid sequence, 259 residues long: Pyrroloquinoline-quinone synthase (259 aa).

Belongs to the PqqC family.

It catalyses the reaction 6-(2-amino-2-carboxyethyl)-7,8-dioxo-1,2,3,4,7,8-hexahydroquinoline-2,4-dicarboxylate + 3 O2 = pyrroloquinoline quinone + 2 H2O2 + 2 H2O + H(+). The protein operates within cofactor biosynthesis; pyrroloquinoline quinone biosynthesis. Its function is as follows. Ring cyclization and eight-electron oxidation of 3a-(2-amino-2-carboxyethyl)-4,5-dioxo-4,5,6,7,8,9-hexahydroquinoline-7,9-dicarboxylic-acid to PQQ. This Bradyrhizobium diazoefficiens (strain JCM 10833 / BCRC 13528 / IAM 13628 / NBRC 14792 / USDA 110) protein is Pyrroloquinoline-quinone synthase.